We begin with the raw amino-acid sequence, 184 residues long: Probable cobalt-precorrin-6B C(15)-methyltransferase (decarboxylating) (184 aa).

Residues Thr-12, 36 to 40, Asp-59, and Ala-87 each bind S-adenosyl-L-methionine; that span reads GCGTG.

Belongs to the methyltransferase superfamily. Archaeal-type CbiT family.

It carries out the reaction Co-precorrin-6B + S-adenosyl-L-methionine = Co-precorrin-7 + S-adenosyl-L-homocysteine + CO2. It participates in cofactor biosynthesis; adenosylcobalamin biosynthesis; cob(II)yrinate a,c-diamide from sirohydrochlorin (anaerobic route): step 8/10. Catalyzes the methylation of C-15 in cobalt-precorrin-6B followed by the decarboxylation of C-12 to form cobalt-precorrin-7. The polypeptide is Probable cobalt-precorrin-6B C(15)-methyltransferase (decarboxylating) (Methanosarcina acetivorans (strain ATCC 35395 / DSM 2834 / JCM 12185 / C2A)).